Consider the following 317-residue polypeptide: Melanocyte-stimulating hormone receptor (317 aa).

Over 1 to 37 (MPVQGSQRRLLGSLNSTPTATPRLGLAANQTGARCLE) the chain is Extracellular. An N-linked (GlcNAc...) asparagine glycan is attached at Asn29. A helical membrane pass occupies residues 38 to 63 (VSIPDGLFLSLGLVSLVENVLVVVAI). Residues 64–72 (ARNRNLHSP) are Cytoplasmic-facing. A helical transmembrane segment spans residues 73–93 (MYCFICCLALSDLLVSGSNML). The Extracellular segment spans residues 94–118 (ETAVFLLLEAGALAARAAVVQQLDN). Residues 119-140 (VIDVITCSSMLSSLCFLGAIAV) form a helical membrane-spanning segment. At 141–163 (DRYISIFYALRYHSIVTLRRARR) the chain is on the cytoplasmic side. A helical membrane pass occupies residues 164-183 (VVAAIWVASVLFSTLFIAYC). Residues 184 to 191 (DHAAVLLC) are Extracellular-facing. The helical transmembrane segment at 192 to 211 (LVVFFLAMLVLMAVLYVHML) threads the bilayer. The Cytoplasmic portion of the chain corresponds to 212 to 240 (ARACQHAQGIAQLHKRQRPAHQGVGLKGA). Residues 241 to 266 (ATLTILLGIFFLCWGPFFLHLTLIVL) traverse the membrane as a helical segment. The Extracellular portion of the chain corresponds to 267–279 (CPQHPTCSCIFKN). The helical transmembrane segment at 280–300 (FNLFLTLIICNAIIDPLIYAF) threads the bilayer. Topologically, residues 301–317 (RSQELRRTLKKVLLCSW) are cytoplasmic. A lipid anchor (S-palmitoyl cysteine) is attached at Cys315.

This sequence belongs to the G-protein coupled receptor 1 family. Interacts with MGRN1, but does not undergo MGRN1-mediated ubiquitination; this interaction competes with GNAS-binding and thus inhibits agonist-induced cAMP production. Interacts with OPN3; the interaction results in a decrease in MC1R-mediated cAMP signaling and ultimately a decrease in melanin production in melanocytes.

The protein resides in the cell membrane. Receptor for MSH (alpha, beta and gamma) and ACTH. The activity of this receptor is mediated by G proteins which activate adenylate cyclase. Mediates melanogenesis, the production of eumelanin (black/brown) and phaeomelanin (red/yellow), via regulation of cAMP signaling in melanocytes. This chain is Melanocyte-stimulating hormone receptor (MC1R), found in Trachypithecus obscurus (Dusky leaf-monkey).